The following is a 155-amino-acid chain: Gas vesicle protein K (155 aa).

The protein belongs to the gas vesicle GvpK family.

It is found in the gas vesicle. Its function is as follows. Might be involved in nucleating gas vesicle formation. Gas vesicles (GV) are hollow, gas filled proteinaceous nanostructures. During planktonic growth they allow positioning of the organism at a favorable depth for light or nutrient acquisition. The protein is Gas vesicle protein K of Dolichospermum flosaquae (Anabaena flos-aquae).